A 203-amino-acid chain; its full sequence is MVVLFLIWSHVNVVVSDSMYPIMKRGDLVIVENAGFEFNPNDVDVGDIVVYKAHWPYYQYLLSEIDYKLNLNPYTTLYIFKEGDFKDMSVKVLGEIKTDKSSYKILEADIPKSPTKPVIHRVIDKVEFNNKTYFIIKGDNNPIHDPELVSINQIKQRVIVVDGHPLVIPYVGYLSIWLKEYWYLVVLFVLIYYAYNYLKGGRK.

Residues 171-191 (VGYLSIWLKEYWYLVVLFVLI) traverse the membrane as a helical segment.

It localises to the membrane. This is an uncharacterized protein from Methanocaldococcus jannaschii (strain ATCC 43067 / DSM 2661 / JAL-1 / JCM 10045 / NBRC 100440) (Methanococcus jannaschii).